Consider the following 71-residue polypeptide: UPF0346 protein str0441 (71 aa).

This sequence belongs to the UPF0346 family.

This is UPF0346 protein str0441 from Streptococcus thermophilus (strain CNRZ 1066).